Consider the following 507-residue polypeptide: Glycerol kinase (507 aa).

Thr15 contributes to the ADP binding site. Residues Thr15, Thr16, and Ser17 each coordinate ATP. Sn-glycerol 3-phosphate is bound at residue Thr15. Residue Arg19 participates in ADP binding. Residues Arg85, Glu86, Tyr137, and Asp250 each contribute to the sn-glycerol 3-phosphate site. Residues Arg85, Glu86, Tyr137, Asp250, and Gln251 each coordinate glycerol. The ADP site is built by Thr272, Gly316, and Gly418. The ATP site is built by Thr272, Gly316, and Gly418.

The protein belongs to the FGGY kinase family.

The enzyme catalyses glycerol + ATP = sn-glycerol 3-phosphate + ADP + H(+). It participates in polyol metabolism; glycerol degradation via glycerol kinase pathway; sn-glycerol 3-phosphate from glycerol: step 1/1. With respect to regulation, inhibited by fructose 1,6-bisphosphate (FBP). Functionally, key enzyme in the regulation of glycerol uptake and metabolism. Catalyzes the phosphorylation of glycerol to yield sn-glycerol 3-phosphate. The chain is Glycerol kinase from Malacoplasma penetrans (strain HF-2) (Mycoplasma penetrans).